We begin with the raw amino-acid sequence, 302 residues long: Nucleotide-binding protein SE_0548 (302 aa).

18–25 (GMSGAGKS) is an ATP binding site. 69–72 (DLRG) is a GTP binding site.

It belongs to the RapZ-like family.

Its function is as follows. Displays ATPase and GTPase activities. This Staphylococcus epidermidis (strain ATCC 12228 / FDA PCI 1200) protein is Nucleotide-binding protein SE_0548.